Here is an 813-residue protein sequence, read N- to C-terminus: Envelope glycoprotein H (813 aa).

Positions 1-18 (MGLPGSIVFLIMIHAFCA) are cleaved as a signal peptide. Over 19 to 769 (KKTPTNTLPS…ESERVTIISA (751 aa)) the chain is Virion surface. N-linked (GlcNAc...) asparagine; by host glycans are attached at residues Asn-62 and Asn-116. A disordered region spans residues 135 to 159 (DRSGLKLDDKDDAQPTGTNPPTELK). A compositionally biased stretch (basic and acidic residues) spans 137–147 (SGLKLDDKDDA). The interval 212–273 (DGAEVIMKIG…FTRRPYLIYL (62 aa)) is interaction with gL. 8 N-linked (GlcNAc...) asparagine; by host glycosylation sites follow: Asn-247, Asn-279, Asn-410, Asn-434, Asn-469, Asn-576, Asn-727, and Asn-750. A helical membrane pass occupies residues 770–790 (TYVATATAGASIAISIAIITV). The Intravirion segment spans residues 791–813 (RMIINNFRYNYHRYKKLSLYDDL).

Belongs to the herpesviridae glycoprotein H family. Interacts with glycoprotein L (gL); this interaction is necessary for the correct processing and cell surface expression of gH. The heterodimer gH/gL seems to interact with gB trimers during fusion. Post-translationally, N-glycosylated, O-glycosylated, and sialylated.

It localises to the virion membrane. The protein localises to the host cell membrane. It is found in the host endosome membrane. In terms of biological role, the heterodimer glycoprotein H-glycoprotein L is required for the fusion of viral and plasma membranes leading to virus entry into the host cell. Following initial binding to host receptor, membrane fusion is mediated by the fusion machinery composed of gB and the heterodimer gH/gL. May also be involved in the fusion between the virion envelope and the outer nuclear membrane during virion morphogenesis. The polypeptide is Envelope glycoprotein H (Gallus gallus (Chicken)).